Consider the following 686-residue polypeptide: Methionine--tRNA ligase (686 aa).

Residues 15–25 (PYANGPIHLGH) carry the 'HIGH' region motif. Cys-146, Cys-149, Cys-159, and Cys-162 together coordinate Zn(2+). A 'KMSKS' region motif is present at residues 331–335 (KMSKS). Lys-334 contacts ATP. A tRNA-binding domain is found at 584–686 (DFAKIDLRVA…AGVKAGSRVM (103 aa)).

This sequence belongs to the class-I aminoacyl-tRNA synthetase family. MetG type 1 subfamily. As to quaternary structure, homodimer. Requires Zn(2+) as cofactor.

It localises to the cytoplasm. It carries out the reaction tRNA(Met) + L-methionine + ATP = L-methionyl-tRNA(Met) + AMP + diphosphate. Is required not only for elongation of protein synthesis but also for the initiation of all mRNA translation through initiator tRNA(fMet) aminoacylation. In Mannheimia succiniciproducens (strain KCTC 0769BP / MBEL55E), this protein is Methionine--tRNA ligase.